The sequence spans 230 residues: Ribosomal RNA small subunit methyltransferase G (230 aa).

S-adenosyl-L-methionine-binding positions include Gly-80, Phe-85, 131 to 132 (VE), and Arg-145.

The protein belongs to the methyltransferase superfamily. RNA methyltransferase RsmG family.

The protein localises to the cytoplasm. It catalyses the reaction guanosine(527) in 16S rRNA + S-adenosyl-L-methionine = N(7)-methylguanosine(527) in 16S rRNA + S-adenosyl-L-homocysteine. In terms of biological role, specifically methylates the N7 position of guanine in position 527 of 16S rRNA. The polypeptide is Ribosomal RNA small subunit methyltransferase G (Novosphingobium aromaticivorans (strain ATCC 700278 / DSM 12444 / CCUG 56034 / CIP 105152 / NBRC 16084 / F199)).